A 469-amino-acid polypeptide reads, in one-letter code: Glutamate--tRNA ligase (469 aa).

A 'HIGH' region motif is present at residues 9-19 (PSPTGFLHVGG). Residues Cys98, Cys100, Cys125, and Asp127 each coordinate Zn(2+). The short motif at 236–240 (KLSKR) is the 'KMSKS' region element. Lys239 provides a ligand contact to ATP.

The protein belongs to the class-I aminoacyl-tRNA synthetase family. Glutamate--tRNA ligase type 1 subfamily. In terms of assembly, monomer. Requires Zn(2+) as cofactor.

It localises to the cytoplasm. The catalysed reaction is tRNA(Glu) + L-glutamate + ATP = L-glutamyl-tRNA(Glu) + AMP + diphosphate. Its function is as follows. Catalyzes the attachment of glutamate to tRNA(Glu) in a two-step reaction: glutamate is first activated by ATP to form Glu-AMP and then transferred to the acceptor end of tRNA(Glu). The polypeptide is Glutamate--tRNA ligase (Shewanella sp. (strain ANA-3)).